A 321-amino-acid polypeptide reads, in one-letter code: tRNA pseudouridine synthase B (321 aa).

Residue D47 is the Nucleophile of the active site.

This sequence belongs to the pseudouridine synthase TruB family. Type 1 subfamily.

It carries out the reaction uridine(55) in tRNA = pseudouridine(55) in tRNA. Responsible for synthesis of pseudouridine from uracil-55 in the psi GC loop of transfer RNAs. The polypeptide is tRNA pseudouridine synthase B (Shewanella baltica (strain OS223)).